A 233-amino-acid chain; its full sequence is 7-cyano-7-deazaguanine synthase (233 aa).

17 to 27 serves as a coordination point for ATP; the sequence is LSGGLDSMVCA. Zn(2+) is bound by residues Cys-196, Cys-206, Cys-209, and Cys-212.

It belongs to the QueC family. Zn(2+) is required as a cofactor.

The catalysed reaction is 7-carboxy-7-deazaguanine + NH4(+) + ATP = 7-cyano-7-deazaguanine + ADP + phosphate + H2O + H(+). The protein operates within purine metabolism; 7-cyano-7-deazaguanine biosynthesis. Functionally, catalyzes the ATP-dependent conversion of 7-carboxy-7-deazaguanine (CDG) to 7-cyano-7-deazaguanine (preQ(0)). The polypeptide is 7-cyano-7-deazaguanine synthase (Novosphingobium aromaticivorans (strain ATCC 700278 / DSM 12444 / CCUG 56034 / CIP 105152 / NBRC 16084 / F199)).